Consider the following 397-residue polypeptide: Multidrug resistance protein MdtH (397 aa).

The next 10 membrane-spanning stretches (helical) occupy residues Trp-11 to Ile-31, Phe-71 to Leu-91, Ala-94 to Phe-114, Leu-137 to Leu-157, Tyr-163 to Leu-183, Leu-211 to Ile-231, Ala-242 to Ala-262, Phe-291 to Ile-311, Leu-338 to Ala-358, and Leu-366 to Phe-386.

It belongs to the major facilitator superfamily. DHA1 family. MdtH (TC 2.A.1.2.21) subfamily.

It is found in the cell inner membrane. This is Multidrug resistance protein MdtH from Aeromonas salmonicida (strain A449).